The primary structure comprises 86 residues: Small ribosomal subunit protein uS17 (86 aa).

The protein belongs to the universal ribosomal protein uS17 family. As to quaternary structure, part of the 30S ribosomal subunit.

Its function is as follows. One of the primary rRNA binding proteins, it binds specifically to the 5'-end of 16S ribosomal RNA. In Methylococcus capsulatus (strain ATCC 33009 / NCIMB 11132 / Bath), this protein is Small ribosomal subunit protein uS17.